We begin with the raw amino-acid sequence, 116 residues long: Protein Wnt-5a (116 aa).

Ser-1 carries the O-palmitoleoyl serine; by PORCN lipid modification. 2 N-linked (GlcNAc...) asparagine glycosylation sites follow: Asn-69 and Asn-83. An intrachain disulfide couples Cys-82 to Cys-97.

It belongs to the Wnt family. Palmitoleoylation is required for efficient binding to frizzled receptors. Depalmitoleoylation leads to Wnt signaling pathway inhibition.

Its subcellular location is the secreted. It localises to the extracellular space. It is found in the extracellular matrix. Its function is as follows. Ligand for members of the frizzled family of seven transmembrane receptors. Can activate or inhibit canonical Wnt signaling, depending on receptor context. Required during embryogenesis for extension of the primary anterior-posterior axis. The polypeptide is Protein Wnt-5a (WNT5A) (Meleagris gallopavo (Wild turkey)).